Here is a 549-residue protein sequence, read N- to C-terminus: NAC domain-containing protein 53 (549 aa).

In terms of domain architecture, NAC spans 9 to 159; that stretch reads LAPGFRFHPT…AFVLCRIFQK (151 aa). Residues 108–165 mediate DNA binding; sequence VGMKKTLVYHKGRAPRGERTNWVMHEYRLVDQDLDKTGVHQDAFVLCRIFQKSGSGPK. Positions 395–416 are enriched in basic and acidic residues; sequence LEKEETSRSKHVVEEKEKDEAS. The interval 395–418 is disordered; sequence LEKEETSRSKHVVEEKEKDEASCS. Residues 526-546 traverse the membrane as a helical segment; the sequence is LIFMCFWVLLLSVSFKVSILV.

In terms of tissue distribution, expressed in roots, rosette leaves, cauline leaves, shoot apex and stems.

The protein resides in the endoplasmic reticulum membrane. It is found in the nucleus. Functionally, transcriptional activator activated by proteolytic cleavage through regulated intramembrane proteolysis (RIP). Promotes reactive oxygen species (ROS) production during drought-induced leaf senescence. In response to abscisic acid (ABA)-mediated drought stress signals, binds directly to the promoters of RBOHC and RBOHE genes, encoding ROS biosynthetic enzymes, resulting in ROS accumulation and triggering leaf senescence via programmed cell death (PCD). ROS-induced leaf senescence sustains plant survival under drought conditions. Involved in heat stress response. Modulates PCD through a ROS-mediated positive feedback control under heat stress conditions. This may provide an adaptation strategy for plant survival under extreme heat stress conditions. Acts as a repressor in preventing anther dehiscence during stamen development by suppressing genes that participate in jasmonic acid (JA) biosynthesis, such as DAD1, AOS, AOC3, OPR3 and 4CLL5/OPCL1. This Arabidopsis thaliana (Mouse-ear cress) protein is NAC domain-containing protein 53.